A 247-amino-acid polypeptide reads, in one-letter code: ATP synthase subunit a, chloroplastic (247 aa).

5 helical membrane-spanning segments follow: residues 38–58, 95–115, 134–154, 199–219, and 220–240; these read QVLITSWVVITILLGSVIIAV, VPFIGTMFLFIFVSNWSGALL, INTTVALALLTSAAYFYAGLS, LVVVVLVSLVPLVVPIPVMFL, and GLFTSGIQALIFATLAAAYIG.

Belongs to the ATPase A chain family. In terms of assembly, F-type ATPases have 2 components, CF(1) - the catalytic core - and CF(0) - the membrane proton channel. CF(1) has five subunits: alpha(3), beta(3), gamma(1), delta(1), epsilon(1). CF(0) has four main subunits: a, b, b' and c.

The protein localises to the plastid. It localises to the chloroplast thylakoid membrane. Its function is as follows. Key component of the proton channel; it plays a direct role in the translocation of protons across the membrane. This chain is ATP synthase subunit a, chloroplastic, found in Oryza sativa subsp. indica (Rice).